We begin with the raw amino-acid sequence, 779 residues long: MEKRKRESSERSFGESESVSSLSEKDSEIQPESTMESRDDEIQSPTVSLEVETEKEELKDSMKTLAEKLSAALANVSAKDDLVKQHVKVAEEAVAGWEKAENEVVELKEKLEAADDKNRVLEDRVSHLDGALKECVRQLRQARDEQEQRIQDAVIERTQELQSSRTSLENQIFETATKSEELSQMAESVAKENVMLRHELLARCEELEIRTIERDLSTQAAETASKQQLDSIKKVAKLEAECRKFRMLAKSSASFNDHRSTDSHSDGGERMDVSCSDSWASSTLIEKRSLQGTSSSIELDLMGDFLEMERLVALPETPDGNGKSGPESVTEEVVVPSENSLASEIEVLTSRIKELEEKLEKLEAEKHELENEVKCNREEAVVHIENSEVLTSRTKELEEKLEKLEAEKEELKSEVKCNREKAVVHVENSLAAEIEVLTSRTKELEEQLEKLEAEKVELESEVKCNREEAVAQVENSLATEIEVLTCRIKQLEEKLEKLEVEKDELKSEVKCNREVESTLRFELEAIACEKMELENKLEKLEVEKAELQISFDIIKDKYEESQVCLQEIETKLGEIQTEMKLVNELKAEVESQTIAMEADAKTKSAKIESLEEDMRKERFAFDELRRKCEALEEEISLHKENSIKSENKEPKIKQEDIETAAGKLANCQKTIASLGKQLQSLATLEDFLTDTPIIPMAANGVSSSSNSESWKVHKNETFMTRNHPESIKPTKETSPSSSSSTASAAVSMPVSTNRGSSEKNRNGFATVFTRSKDGIHLAI.

The span at 1-14 (MEKRKRESSERSFG) shows a compositional bias: basic and acidic residues. 3 disordered regions span residues 1 to 55 (MEKR…ETEK), 253 to 274 (ASFN…MDVS), and 315 to 336 (PETP…VVVP). Positions 47–200 (VSLEVETEKE…KENVMLRHEL (154 aa)) form a coiled coil. Basic and acidic residues predominate over residues 256–272 (NDHRSTDSHSDGGERMD). The span at 324-336 (SGPESVTEEVVVP) shows a compositional bias: low complexity. Residues 337–674 (SENSLASEIE…ANCQKTIASL (338 aa)) adopt a coiled-coil conformation. A compositionally biased stretch (basic and acidic residues) spans 718–731 (FMTRNHPESIKPTK). The tract at residues 718–764 (FMTRNHPESIKPTKETSPSSSSSTASAAVSMPVSTNRGSSEKNRNGF) is disordered. The segment covering 733-752 (TSPSSSSSTASAAVSMPVST) has biased composition (low complexity).

The protein belongs to the FPP family. Interacts with WPP/MAF proteins.

The protein is Filament-like plant protein 1 (FPP1) of Arabidopsis thaliana (Mouse-ear cress).